Here is a 480-residue protein sequence, read N- to C-terminus: Acyl-lipid (8-3)-desaturase (480 aa).

A disordered region spans residues 1–30; sequence MAPHSADTAGLVPSDELRLRTSNSKGPEQE. Positions 33–107 constitute a Cytochrome b5 heme-binding domain; that stretch reads LKKYTLEDVS…LAKYCIGELV (75 aa). Residues H68 and H90 each contribute to the heme site. 2 helical membrane-spanning segments follow: residues 151–171 and 173–193; these read IHPH…ASYY and AFFW…MGFF. Positions 203 to 207 match the Histidine box-1 motif; the sequence is HDGNH. The Histidine box-2 motif lies at 238–243; sequence HVVGHH. 3 helical membrane passes run 280 to 300, 322 to 342, and 348 to 368; these read IYLA…DDFL, IFFQ…SVYG, and TFLA…AFLF. A Histidine box-3 motif is present at residues 419-423; it reads QIEHH.

Belongs to the fatty acid desaturase type 1 family. Fe(2+) serves as cofactor.

The protein localises to the membrane. It carries out the reaction an (8Z,11Z,14Z)-icosatrienoyl-containing glycerolipid + 2 Fe(II)-[cytochrome b5] + O2 + 2 H(+) = (5Z,8Z,11Z,14Z)-eicosatetraenoyl-containing glycerolipid + 2 Fe(III)-[cytochrome b5] + 2 H2O. The catalysed reaction is an (8Z,11Z,14Z,17Z)-eicosatetraenoyl-containing glycerolipid + 2 Fe(II)-[cytochrome b5] + O2 + 2 H(+) = a (5Z,8Z,11Z,14Z,17Z)-eicosapentaenoyl-containing glycerolipid + 2 Fe(III)-[cytochrome b5] + 2 H2O. Fatty acid desaturase that introduces a cis double bond at the 5-position in 20-carbon polyunsaturated fatty acids incorporated in a glycerolipid that contain a Delta(8) double bond. The protein is Acyl-lipid (8-3)-desaturase of Physcomitrium patens (Spreading-leaved earth moss).